The primary structure comprises 229 residues: Prolactin (229 aa).

An N-terminal signal peptide occupies residues 1-30 (MDSKGSAQKGSRLLLLLVVSNLLLCQGVVS). C34 and C41 are joined by a disulfide. S56, S64, and S120 each carry phosphoserine. Disulfide bonds link C88–C204 and C221–C229.

The protein belongs to the somatotropin/prolactin family. As to quaternary structure, interacts with PRLR.

The protein resides in the secreted. In terms of biological role, prolactin acts primarily on the mammary gland by promoting lactation. This chain is Prolactin (PRL), found in Capra hircus (Goat).